The following is a 200-amino-acid chain: Integrin beta-1-binding protein 1 (200 aa).

The span at 1-10 (MFRKGKKRHS) shows a compositional bias: basic residues. The segment at 1-55 (MFRKGKKRHSSSSSQSSEISTKSKSVDSSLGGLSRSSTVASLDTDSTKSSGQSNS) is disordered. The Nuclear localization signal motif lies at 6-7 (KK). Residues 11–29 (SSSSQSSEISTKSKSVDSS) show a composition bias toward low complexity. Residues 34–55 (SRSSTVASLDTDSTKSSGQSNS) are compositionally biased toward polar residues. Thr38 carries the post-translational modification Phosphothreonine; by CaMK2. Ser41 is modified (phosphoserine). Residues 58–200 (DTCAEFRIKY…FDSVLTSDKS (143 aa)) enclose the PID domain. The segment at 136 to 139 (YLII) is interaction with KRIT1. The tract at residues 139–141 (IRM) is interaction with ITGB1.

As to quaternary structure, found in a complex, at least composed of ITGB1BP1, KRIT1 and RAP1A. Interacts (via C-terminal region) with ITGB1 (via C-terminal cytoplasmic tail); the interaction prevents talin TLN1 binding to ITGB1 and KRIT1 and ITGB1 compete for the same binding site. Interacts with KRIT1 (via N-terminal NPXY motif); the interaction induces the opening conformation of KRIT1 and KRIT1 and ITGB1 compete for the same binding site. Isoform 2 does not interact with ITGB1. Interacts with CDC42 (GTP- or GDP-bound form); the interaction is increased with the CDC42-membrane bound forms and prevents both CDC42 activation and cell spreading. Interacts (via C-terminal domain region) with NME2. Interacts with FERMT2 and RAC1. Interacts (via N-terminus and PTB domain) with ROCK1. Phosphorylation at Thr-38 seems to enhance integrin alpha5beta1-mediated cell adhesion. The degree of phosphorylation is regulated by integrin-dependent cell-matrix interaction. Expressed in the brain.

The protein resides in the nucleus. The protein localises to the cytoplasm. Its subcellular location is the cytoskeleton. It is found in the cell membrane. It localises to the cell projection. The protein resides in the lamellipodium. The protein localises to the ruffle. Its function is as follows. Key regulator of the integrin-mediated cell-matrix interaction signaling by binding to the ITGB1 cytoplasmic tail and preventing the activation of integrin alpha-5/beta-1 (heterodimer of ITGA5 and ITGB1) by talin or FERMT1. Plays a role in cell proliferation, differentiation, spreading, adhesion and migration in the context of mineralization and bone development and angiogenesis. Stimulates cellular proliferation in a fibronectin-dependent manner. Involved in the regulation of beta-1 integrin-containing focal adhesion (FA) site dynamics by controlling its assembly rate during cell adhesion; inhibits beta-1 integrin clustering within FA by directly competing with talin TLN1, and hence stimulates osteoblast spreading and migration in a fibronectin- and/or collagen-dependent manner. Acts as a guanine nucleotide dissociation inhibitor (GDI) by regulating Rho family GTPases during integrin-mediated cell matrix adhesion; reduces the level of active GTP-bound form of both CDC42 and RAC1 GTPases upon cell adhesion to fibronectin. Stimulates the release of active CDC42 from the membranes to maintain it in an inactive cytoplasmic pool. Participates in the translocation of the Rho-associated protein kinase ROCK1 to membrane ruffles at cell leading edges of the cell membrane, leading to an increase of myoblast cell migration on laminin. Plays a role in bone mineralization at a late stage of osteoblast differentiation; modulates the dynamic formation of focal adhesions into fibrillar adhesions, which are adhesive structures responsible for fibronectin deposition and fibrillogenesis. Plays a role in blood vessel development; acts as a negative regulator of angiogenesis by attenuating endothelial cell proliferation and migration, lumen formation and sprouting angiogenesis by promoting AKT phosphorylation and inhibiting ERK1/2 phosphorylation through activation of the Notch signaling pathway. Promotes transcriptional activity of the MYC promoter. The protein is Integrin beta-1-binding protein 1 (Itgb1bp1) of Mus musculus (Mouse).